The sequence spans 252 residues: Imidazole glycerol phosphate synthase subunit HisF (252 aa).

Residues Asp-11 and Asp-130 contribute to the active site.

Belongs to the HisA/HisF family. As to quaternary structure, heterodimer of HisH and HisF.

It is found in the cytoplasm. It carries out the reaction 5-[(5-phospho-1-deoxy-D-ribulos-1-ylimino)methylamino]-1-(5-phospho-beta-D-ribosyl)imidazole-4-carboxamide + L-glutamine = D-erythro-1-(imidazol-4-yl)glycerol 3-phosphate + 5-amino-1-(5-phospho-beta-D-ribosyl)imidazole-4-carboxamide + L-glutamate + H(+). It participates in amino-acid biosynthesis; L-histidine biosynthesis; L-histidine from 5-phospho-alpha-D-ribose 1-diphosphate: step 5/9. Its function is as follows. IGPS catalyzes the conversion of PRFAR and glutamine to IGP, AICAR and glutamate. The HisF subunit catalyzes the cyclization activity that produces IGP and AICAR from PRFAR using the ammonia provided by the HisH subunit. The polypeptide is Imidazole glycerol phosphate synthase subunit HisF (Thermococcus gammatolerans (strain DSM 15229 / JCM 11827 / EJ3)).